The chain runs to 140 residues: uncharacterized protein (140 aa).

Belongs to the peptidase S24 family.

This is an uncharacterized protein from Haemophilus influenzae (strain ATCC 51907 / DSM 11121 / KW20 / Rd).